The sequence spans 374 residues: uncharacterized protein (374 aa).

It belongs to the mimivirus R640 family.

It is found in the virion. This is an uncharacterized protein from Acanthamoeba polyphaga (Amoeba).